The sequence spans 232 residues: Glutathione-specific gamma-glutamylcyclotransferase (232 aa).

Position 10–15 (10–15 (VLGYGS)) interacts with substrate. The Proton acceptor role is filled by Glu-115.

It belongs to the gamma-glutamylcyclotransferase family. ChaC subfamily.

It is found in the cytoplasm. The protein resides in the nucleus. The enzyme catalyses glutathione = L-cysteinylglycine + 5-oxo-L-proline. Its function is as follows. Catalyzes the cleavage of glutathione into 5-oxo-L-proline and a Cys-Gly dipeptide. Acts specifically on glutathione, but not on other gamma-glutamyl peptides. Allows utilization of gluthathione through subsequent cleavage of the Cys-Gly dipeptide by Cys-Gly metallodipeptidase DUG1. The protein is Glutathione-specific gamma-glutamylcyclotransferase of Saccharomyces cerevisiae (strain ATCC 204508 / S288c) (Baker's yeast).